Consider the following 359-residue polypeptide: Putative nucleotidyltransferase MAB21L1 (359 aa).

A ribonucleoside 5'-triphosphate contacts are provided by residues 23 to 24 (RK) and 63 to 66 (YEGL). E73 and E75 together coordinate Mg(2+). A ribonucleoside 5'-triphosphate-binding positions include K248 and 252 to 255 (SLLK).

Belongs to the mab-21 family. In terms of assembly, monomer. Homodecamer; composed of 2 back to back homopentamers. The protein may exist as monomer in solution and oiligomerizes upon ligand binding.

The protein localises to the nucleus. In terms of biological role, putative nucleotidyltransferase required for several aspects of embryonic development including normal development of the eye. It is unclear whether it displays nucleotidyltransferase activity in vivo. Binds single-stranded RNA (ssRNA). The chain is Putative nucleotidyltransferase MAB21L1 (mab21l1) from Xenopus laevis (African clawed frog).